The chain runs to 474 residues: PRAME family member 2 (474 aa).

An LRR 1; degenerate repeat occupies 97-124 (RWKLQVLDLRDVDENFWARWPGAWALSC). An LRR 2; degenerate repeat occupies 179 to 203 (HLCCSKLVNYLTPIKYLRKSLKIIY). The stretch at 204–230 (INSIGELEIHNTCWPHLIRKLYCYLKE) is one LRR 3; degenerate repeat. The stretch at 231-265 (MKTLCKLVFSRCHHYTSDNELEGWLVTRFTSVFLR) is one LRR 4; degenerate repeat. 5 LRR repeats span residues 266-291 (LEHL…IRCL), 292-323 (QNPL…GYLK), 324-342 (HLNL…PLGA), 348-375 (AASL…GLSC), and 376-400 (CSQL…LLRH).

The protein belongs to the PRAME family.

This Homo sapiens (Human) protein is PRAME family member 2.